A 448-amino-acid polypeptide reads, in one-letter code: Microtubule-associated protein tau (448 aa).

Over residues 1 to 16 (MAEPRQEFDVMEDHAQ) the composition is skewed to basic and acidic residues. A disordered region spans residues 1–264 (MAEPRQEFDV…GPMPDLKNVK (264 aa)). The residue at position 2 (Ala2) is an N-acetylalanine. A Phosphotyrosine modification is found at Tyr19. A Glycyl lysine isopeptide (Lys-Gly) (interchain with G-Cter in ubiquitin) cross-link involves residue Lys33. Residues Ser35 and Ser50 each carry the phosphoserine modification. Polar residues predominate over residues 50 to 60 (SETSDAKSTPT). Thr58 and Thr60 each carry phosphothreonine. The segment covering 71–89 (EGAPGEQAAAQAPAEIPEG) has biased composition (low complexity). The residue at position 100 (Thr100) is a Phosphothreonine. Over residues 119 to 135 (KGKDGTGPDDKKTKGAD) the composition is skewed to basic and acidic residues. At Thr144 the chain carries Phosphothreonine. Arg146 bears the Omega-N-methylarginine mark. Lys154 is subject to N6,N6-dimethyllysine; alternate. At Lys154 the chain carries N6-acetyllysine; alternate. A phosphothreonine mark is found at Thr160, Thr166, Thr167, and Thr172. Residues 163–176 (PAKTTPTPKTSPAT) show a composition bias toward low complexity. The span at 189–200 (KSERGESGKSGD) shows a compositional bias: basic and acidic residues. Phosphoserine occurs at positions 198 and 202. Residues 201–221 (RSGYSSPGSPGTPGSRSRTPS) show a composition bias toward low complexity. Tyr204 carries the post-translational modification Phosphotyrosine. 3 positions are modified to phosphoserine: Ser205, Ser206, and Ser209. Phosphothreonine occurs at positions 212 and 219. Position 221 is a phosphoserine (Ser221). Thr224 is modified (phosphothreonine). Lys232 bears the N6-acetyllysine mark. Thr238 bears the Phosphothreonine mark. A phosphoserine mark is found at Ser242 and Ser244. Tau/MAP repeat units lie at residues 251 to 281 (QAAPGPMPDLKNVKSKIGSTENLKHQPGGGK), 282 to 312 (VQIINKKLDLSNVQSKCGSKDNIKHVPGGGS), 313 to 343 (VQIVYKPVDLSKVTSKCGSLGNIHHKPGGGQ), and 344 to 375 (VEVKSEKLDFKDRVQSKIGSLDNITHVPGGGN). Lys261 participates in a covalent cross-link: Glycyl lysine isopeptide (Lys-Gly) (interchain with G-Cter in ubiquitin). An N6-acetyllysine; alternate modification is found at Lys266. Lys266 carries the post-translational modification N6-methyllysine; alternate. Residue Lys266 forms a Glycyl lysine isopeptide (Lys-Gly) (interchain with G-Cter in ubiquitin); alternate linkage. A Phosphoserine modification is found at Ser269. Lys274 is covalently cross-linked (Glycyl lysine isopeptide (Lys-Gly) (interchain with G-Cter in ubiquitin)). N6-acetyllysine; alternate is present on Lys288. Residue Lys288 forms a Glycyl lysine isopeptide (Lys-Gly) (interchain with G-Cter in ubiquitin); alternate linkage. A phosphoserine mark is found at Ser292 and Ser296. At Lys297 the chain carries N6-acetyllysine. Residues Cys298 and Cys329 are joined by a disulfide bond. Ser300 carries the phosphoserine modification. Lys305 carries the post-translational modification N6-acetyllysine; alternate. Residue Lys305 forms a Glycyl lysine isopeptide (Lys-Gly) (interchain with G-Cter in ubiquitin); alternate linkage. Ser312 carries the phosphoserine modification. Position 318 is an N6,N6-dimethyllysine; alternate (Lys318). 3 positions are modified to N6-acetyllysine; alternate: Lys318, Lys324, and Lys328. Glycyl lysine isopeptide (Lys-Gly) (interchain with G-Cter in ubiquitin); alternate cross-links involve residues Lys318, Lys324, and Lys328. Ser331 is subject to Phosphoserine. An N6-acetyllysine; alternate mark is found at Lys338, Lys350, and Lys354. Glycyl lysine isopeptide (Lys-Gly) (interchain with G-Cter in ubiquitin); alternate cross-links involve residues Lys338, Lys350, and Lys354. Arg356 is modified (omega-N-methylarginine). Ser359 is modified (phosphoserine). Lys360 participates in a covalent cross-link: Glycyl lysine isopeptide (Lys-Gly) (interchain with G-Cter in ubiquitin). At Ser363 the chain carries Phosphoserine. Residue Lys376 is modified to N6-acetyllysine; alternate. Residue Lys376 forms a Glycyl lysine isopeptide (Lys-Gly) (interchain with G-Cter in ubiquitin); alternate linkage. Residue Lys382 forms a Glycyl lysine isopeptide (Lys-Gly) (interchain with G-Cter in ubiquitin) linkage. N6-acetyllysine; alternate is present on Lys392. Lys392 participates in a covalent cross-link: Glycyl lysine isopeptide (Lys-Gly) (interchain with G-Cter in ubiquitin); alternate. Tyr401 is modified (phosphotyrosine). A phosphoserine mark is found at Ser403 and Ser407. Residues 405-424 (VVSGDTSPRHLSNVSSTGSI) are disordered. Residues 408-423 (GDTSPRHLSNVSSTGS) show a composition bias toward polar residues. Thr410 carries the post-translational modification Phosphothreonine. A phosphoserine mark is found at Ser411, Ser416, Ser423, and Ser429. Position 434 is a phosphothreonine (Thr434).

Interacts with MARK1, MARK2, MARK3 and MARK4. Interacts with SQSTM1 when polyubiquitinated. Interacts with PSMC2 through SQSTM1. Interacts with FKBP4. Binds to CSNK1D. Interacts with SGK1. Interacts with PIN1. Interacts with LRRK2. Interacts with LRP1, leading to endocytosis; this interaction is reduced in the presence of LRPAP1/RAP. In terms of processing, polyubiquitinated. Requires functional TRAF6 and may provoke SQSTM1-dependent degradation by the proteasome. Post-translationally, phosphorylation at various serine and threonine residues in S-P or T-P motifs by proline-directed protein kinases (PDPK1, CDK1, CDK5, GSK3, MAPK) (a few sites per protein in interphase, more in mitosis), and at serine residues in K-X-G-S motifs by MAP/microtubule affinity-regulating kinase (MARK1, MARK2, MARK3, MARK4), causing detachment from microtubules, and their disassembly. Phosphorylation at Ser-269 by BRSK1 and BRSK2 in neurons affects ability to bind microtubules and plays a role in neuron polarization. Phosphorylated by PHK. Dephosphorylation at several serine and threonine residues by the serine/threonine phosphatase PPP5C. O-glycosylated; contains at least 4 GlcNAc. Site-specific or stoichiometric changes in glycosylation may modulate tau function and also play a role in PHF's formation. In terms of tissue distribution, expressed in neurons.

The protein localises to the cytoplasm. It localises to the cytosol. It is found in the cell membrane. The protein resides in the cytoskeleton. Its subcellular location is the cell projection. The protein localises to the axon. It localises to the dendrite. It is found in the secreted. Functionally, promotes microtubule assembly and stability, and might be involved in the establishment and maintenance of neuronal polarity. The C-terminus binds axonal microtubules while the N-terminus binds neural plasma membrane components, suggesting that tau functions as a linker protein between both. Axonal polarity is predetermined by tau localization (in the neuronal cell) in the domain of the cell body defined by the centrosome. The short isoforms allow plasticity of the cytoskeleton whereas the longer isoforms may preferentially play a role in its stabilization. The polypeptide is Microtubule-associated protein tau (MAPT) (Bos taurus (Bovine)).